The sequence spans 444 residues: UDP-N-acetylmuramoylalanine--D-glutamate ligase (444 aa).

G109–T115 is an ATP binding site.

The protein belongs to the MurCDEF family.

Its subcellular location is the cytoplasm. It carries out the reaction UDP-N-acetyl-alpha-D-muramoyl-L-alanine + D-glutamate + ATP = UDP-N-acetyl-alpha-D-muramoyl-L-alanyl-D-glutamate + ADP + phosphate + H(+). Its pathway is cell wall biogenesis; peptidoglycan biosynthesis. Functionally, cell wall formation. Catalyzes the addition of glutamate to the nucleotide precursor UDP-N-acetylmuramoyl-L-alanine (UMA). The sequence is that of UDP-N-acetylmuramoylalanine--D-glutamate ligase from Bacteroides thetaiotaomicron (strain ATCC 29148 / DSM 2079 / JCM 5827 / CCUG 10774 / NCTC 10582 / VPI-5482 / E50).